We begin with the raw amino-acid sequence, 36 residues long: F420-dependent NADP reductase (36 aa).

9-12 is an NADP(+) binding site; that stretch reads TGNI.

The protein belongs to the F420-dependent NADP reductase family. Homotetramer.

The enzyme catalyses reduced coenzyme F420-(gamma-L-Glu)(n) + NADP(+) = oxidized coenzyme F420-(gamma-L-Glu)(n) + NADPH + 2 H(+). Catalyzes the reduction of NADP(+) with F420H(2) via hydride transfer, and the reverse reaction, i.e. the reduction of F420 with NADPH. In M.organophilum, an alcohol-fermenting methanogen containing an NADP-dependent alcohol dehydrogenase, is probably involved in the regeneration of F420H(2) required for CO(2) reduction to methane. Thus, during growth on alcohol and CO(2), the F420-dependent NADP reductase probably has the function of coupling the NADP-dependent oxidation of the alcohol to the aldehyde with the F420-dependent reduction of CO(2) to methane. This is F420-dependent NADP reductase (fno) from Methanogenium organophilum.